The following is a 177-amino-acid chain: Calerythrin (177 aa).

EF-hand domains lie at 5–40, 45–90, 100–134, and 134–169; these read IASDRLKKRFDRWDFDGNGALERADFEKEAQHIAEA, AGAA…NLIF, VLGPVVKGTWGMCDKNADGQINADEFAAWLTALGM, and MSKAEAAEAFNQVDTNGNGELSLDELLTAVRDFHFG. Ca(2+)-binding residues include Asp-18, Asp-20, Asn-22, and Asp-29. Residues Asp-113, Asn-115, Asp-117, Gln-119, Glu-124, Asp-147, Asn-149, Asn-151, Glu-153, and Glu-158 each contribute to the Ca(2+) site.

The chain is Calerythrin from Saccharopolyspora erythraea (Streptomyces erythraeus).